Consider the following 289-residue polypeptide: Rhodopsin (289 aa).

Residues 1–7 (YLVNPAA) lie on the Extracellular side of the membrane. A helical transmembrane segment spans residues 8–32 (YAALGAYMFLLILIGFPVNFLTLYV). Over 33-44 (TLEHKKLRTPLN) the chain is Cytoplasmic. Residues 45 to 67 (YILLNLAVADLFMVLGGFTTTMY) traverse the membrane as a helical segment. At 68 to 81 (TSMHGYFVLGRLGC) the chain is on the extracellular side. An intrachain disulfide couples Cys81 to Cys158. A helical transmembrane segment spans residues 82–104 (NLEGFFATLGGEIALWSLVVLAI). A 'Ionic lock' involved in activated form stabilization motif is present at residues 105–107 (ERW). At 105-123 (ERWIVVCKPISNFRFTEDH) the chain is on the cytoplasmic side. Residues 124 to 144 (AIMGLAFSWVMALSCSVPPLV) traverse the membrane as a helical segment. Over 145–173 (GWSRYIPEAMQCSCGVDYYTRAEGFNTES) the chain is Extracellular. A helical membrane pass occupies residues 174-195 (FVLYMFTVHFLIPLSVIFFCYG). The Cytoplasmic segment spans residues 196 to 223 (RLLCAVKEAAAAQQESETTQRSEKEVSR). Residues 224-245 (MVVLMVIGFLVCWLPYASTAWW) form a helical membrane-spanning segment. Topologically, residues 246–257 (IFCNQGSEFGPV) are extracellular. A helical transmembrane segment spans residues 258-279 (FMTIPAFFAKSSAIYNPMIYIC). Residue Lys267 is modified to N6-(retinylidene)lysine. Residues 280–289 (MNKQFRHCMI) are Cytoplasmic-facing.

This sequence belongs to the G-protein coupled receptor 1 family. Opsin subfamily. In terms of processing, phosphorylated on some or all of the serine and threonine residues present in the C-terminal region. Post-translationally, contains one covalently linked retinal chromophore.

The protein localises to the membrane. Its subcellular location is the cell projection. It is found in the cilium. The protein resides in the photoreceptor outer segment. In terms of biological role, photoreceptor required for image-forming vision at low light intensity. While most salt water fish species use retinal as chromophore, most freshwater fish use 3-dehydroretinal, or a mixture of retinal and 3-dehydroretinal. Light-induced isomerization of 11-cis to all-trans retinal triggers a conformational change that activates signaling via G-proteins. Subsequent receptor phosphorylation mediates displacement of the bound G-protein alpha subunit by arrestin and terminates signaling. The chain is Rhodopsin (rho) from Comephorus dybowskii.